Here is a 292-residue protein sequence, read N- to C-terminus: RNA polymerase II transcriptional coactivator SUB1 (292 aa).

2 disordered regions span residues 1–31 (MSYY…GGMP) and 117–292 (LLSD…SEEE). The span at 20 to 31 (LSNSNNNNGGMP) shows a compositional bias: low complexity. At Ser-119 the chain carries Phosphoserine. Composition is skewed to basic and acidic residues over residues 133–166 (NNDK…LEPR), 179–191 (PHEE…EREA), 204–240 (KQQE…KIAE), and 251–267 (AKKE…KDAN). 3 positions are modified to phosphoserine: Ser-268, Ser-269, and Ser-289.

Belongs to the transcriptional coactivator PC4 family.

The protein resides in the nucleus. In terms of biological role, plays a role in the release of TFIIB from the transcription complex during transcription initiation. Binds to TFIIB and specifically inhibits the formation of the TBP-TFIIB-promoter complexes. This Saccharomyces cerevisiae (strain ATCC 204508 / S288c) (Baker's yeast) protein is RNA polymerase II transcriptional coactivator SUB1 (SUB1).